Reading from the N-terminus, the 574-residue chain is Bifunctional NAD(P)H-hydrate repair enzyme Nnr (574 aa).

Residues 1-269 (MKPVFSVDQI…SLFERANLKA (269 aa)) form an NAD(P)H-hydrate epimerase region. A YjeF N-terminal domain is found at 10-231 (IRRAENTLFE…DINIAGGGGK (222 aa)). Residues 64 to 68 (GNGGD) are NADPHX 1; for epimerase activity. K(+) is bound by residues Asn65 and Asp123. Residues 127 to 133 (GIGGRGG) form an NADPHX 1; for epimerase activity region. Position 156 (Asp156) interacts with (6S)-NADPHX. Ser159 is a binding site for K(+). One can recognise a YjeF C-terminal domain in the interval 277 to 568 (IGQHFTVLNM…DAIPAATAKV (292 aa)). Residues 277-574 (IGQHFTVLNM…TAKVDLKRIV (298 aa)) are ADP-dependent (S)-NAD(P)H-hydrate dehydratase. Gly365 provides a ligand contact to (6S)-NADPHX. Positions 418–424 (HKGEFER) are NADPHX 2; for dehydratase activity. Residues 461–465 (KGKYT) and 480–489 (HSWLATPGSG) contribute to the ADP site. Asp490 is a binding site for (6S)-NADPHX.

In the N-terminal section; belongs to the NnrE/AIBP family. This sequence in the C-terminal section; belongs to the NnrD/CARKD family. The cofactor is K(+).

The enzyme catalyses (6S)-NADHX + ADP = AMP + phosphate + NADH + H(+). The catalysed reaction is (6S)-NADPHX + ADP = AMP + phosphate + NADPH + H(+). It catalyses the reaction (6R)-NADHX = (6S)-NADHX. It carries out the reaction (6R)-NADPHX = (6S)-NADPHX. Bifunctional enzyme that catalyzes the epimerization of the S- and R-forms of NAD(P)HX and the dehydration of the S-form of NAD(P)HX at the expense of ADP, which is converted to AMP. This allows the repair of both epimers of NAD(P)HX, a damaged form of NAD(P)H that is a result of enzymatic or heat-dependent hydration. This Corynebacterium glutamicum (strain ATCC 13032 / DSM 20300 / JCM 1318 / BCRC 11384 / CCUG 27702 / LMG 3730 / NBRC 12168 / NCIMB 10025 / NRRL B-2784 / 534) protein is Bifunctional NAD(P)H-hydrate repair enzyme Nnr (nnr).